Reading from the N-terminus, the 346-residue chain is Aspartate-semialdehyde dehydrogenase (346 aa).

NADP(+)-binding positions include 13–16 (TGAV) and 41–42 (RS). Ser98 bears the Phosphoserine mark. Arg101 provides a ligand contact to phosphate. Residue Cys130 is the Acyl-thioester intermediate of the active site. Tyr146 is subject to Phosphotyrosine. Residue Gln157 coordinates substrate. 160 to 161 (SG) provides a ligand contact to NADP(+). Lys221 is a binding site for phosphate. Arg243 provides a ligand contact to substrate. His250 acts as the Proton acceptor in catalysis. Residue Asn324 participates in NADP(+) binding.

It belongs to the aspartate-semialdehyde dehydrogenase family. In terms of assembly, homodimer.

It catalyses the reaction L-aspartate 4-semialdehyde + phosphate + NADP(+) = 4-phospho-L-aspartate + NADPH + H(+). It functions in the pathway amino-acid biosynthesis; L-lysine biosynthesis via DAP pathway; (S)-tetrahydrodipicolinate from L-aspartate: step 2/4. Its pathway is amino-acid biosynthesis; L-methionine biosynthesis via de novo pathway; L-homoserine from L-aspartate: step 2/3. It participates in amino-acid biosynthesis; L-threonine biosynthesis; L-threonine from L-aspartate: step 2/5. In terms of biological role, catalyzes the NADPH-dependent formation of L-aspartate-semialdehyde (L-ASA) by the reductive dephosphorylation of L-aspartyl-4-phosphate. This chain is Aspartate-semialdehyde dehydrogenase, found in Bacillus subtilis (strain 168).